The following is a 334-amino-acid chain: YbbR-like domain-containing protein BB_0009 (334 aa).

A helical membrane pass occupies residues 22-38; the sequence is AISILIAILMFVAFNFN. 2 consecutive YbbR-like domains span residues 43 to 128 and 138 to 220; these read ITTE…NVLL and VKIE…VVNI.

It localises to the membrane. The sequence is that of YbbR-like domain-containing protein BB_0009 from Borreliella burgdorferi (strain ATCC 35210 / DSM 4680 / CIP 102532 / B31) (Borrelia burgdorferi).